The following is a 357-amino-acid chain: DNA replication and repair protein RecF (357 aa).

30–37 (GANGSGKT) is an ATP binding site.

Belongs to the RecF family.

It is found in the cytoplasm. Functionally, the RecF protein is involved in DNA metabolism; it is required for DNA replication and normal SOS inducibility. RecF binds preferentially to single-stranded, linear DNA. It also seems to bind ATP. The chain is DNA replication and repair protein RecF from Salmonella heidelberg (strain SL476).